The chain runs to 395 residues: Secreted aspartyl protease 1 (395 aa).

The N-terminal stretch at 1–20 is a signal peptide; that stretch reads MQLSIQAIIGFVVAAGLAVA. Positions 21–88 are cleaved as a propeptide — removed in mature form; the sequence is SELPSPMTVN…HLLLDLIDKR (68 aa). The N-linked (GlcNAc...) asparagine glycan is linked to Asn41. Residues 105–391 form the Peptidase A1 domain; it reads WAGDVQFGQS…DMGKNRMGFA (287 aa). Residues Asp121 and Asp283 contribute to the active site. A disulfide bridge connects residues Cys321 and Cys352.

This sequence belongs to the peptidase A1 family.

The protein localises to the secreted. With respect to regulation, inhibited by pepstatin A. Its function is as follows. Dominant secreted aspartyl protease that has a clear preference for aromatic residues in the P1' position directly adjacent to the cleavage site and, in particular, Trp. In addition, it generally cleaves peptides containing Lys, Arg, Phe, Tyr, or Nle (norleucine) in the P1 position, Nle and Glu at P2, and Arg and Val at P2'. Has important roles in facilitating the interaction of the yeast with the external environment. Is able to rapidly hydrolyze Staphylococcus aureus protein A, an important S.aureus virulence factor involved in immune evasion and biofilm formation. Shows anti-biofilm properties and thus plays a role in inter-kingdom interactions, beneficial for host skin health. The polypeptide is Secreted aspartyl protease 1 (Malassezia globosa (strain ATCC MYA-4612 / CBS 7966) (Dandruff-associated fungus)).